Consider the following 422-residue polypeptide: Enolase (422 aa).

Glutamine 162 serves as a coordination point for (2R)-2-phosphoglycerate. Glutamate 204 serves as the catalytic Proton donor. Mg(2+) is bound by residues aspartate 241, glutamate 284, and aspartate 311. (2R)-2-phosphoglycerate contacts are provided by lysine 336, arginine 365, serine 366, and lysine 387. Lysine 336 serves as the catalytic Proton acceptor.

The protein belongs to the enolase family. Requires Mg(2+) as cofactor.

Its subcellular location is the cytoplasm. It localises to the secreted. The protein resides in the cell surface. The catalysed reaction is (2R)-2-phosphoglycerate = phosphoenolpyruvate + H2O. It participates in carbohydrate degradation; glycolysis; pyruvate from D-glyceraldehyde 3-phosphate: step 4/5. In terms of biological role, catalyzes the reversible conversion of 2-phosphoglycerate (2-PG) into phosphoenolpyruvate (PEP). It is essential for the degradation of carbohydrates via glycolysis. The chain is Enolase from Bartonella tribocorum (strain CIP 105476 / IBS 506).